Reading from the N-terminus, the 97-residue chain is uncharacterized protein (97 aa).

The signal sequence occupies residues 1–21; sequence MNKKFSISLLSTILAFLLVLG. The N-palmitoyl cysteine moiety is linked to residue cysteine 22. Cysteine 22 is lipidated: S-diacylglycerol cysteine.

It to B.burgdorferi BBD15.

It is found in the cell membrane. This is an uncharacterized protein from Borreliella burgdorferi (strain ATCC 35210 / DSM 4680 / CIP 102532 / B31) (Borrelia burgdorferi).